A 686-amino-acid chain; its full sequence is MTDITPVQNDVDVNGNNVNDDVSSNLKRPIDQGDPSNGLAEEENPANNQLHLKKARLDGDALTSSPAGLAENGIEGATLAANGENGYNATGSGAEDEQQGLKKEEGGQGTKQEDLDENSKQELPMEVPKEPAPAPPPEPDMNNLPQNPIPKHQQKHALLAIKAVKRLKDARPFLQPVDPVKLDIPFYFNYIKRPMDLSTIERKLNVGAYEVPEQITEDFNLMVNNSIKFNGPNAGISQMARNIQASFEKHMLNMPAKDAPPVIAKGRRSSAQEDAPIVIRRAQTHNGRPKRTIHPPKSKDIYPYESKKPKSKRLQQAMKFCQSVLKELMAKKHASYNYPFLEPVDPVSMNLPTYFDYVKEPMDLGTIAKKLNDWQYQTMEDFERDVRLVFKNCYTFNPDGTIVNMMGHRLEEVFNSKWADRPNLDDYDSDEDSRTQGDYDDYESEYSESDIDETIITNPAIQYLEEQLARMKVELQQLKKQELEKIRKERRLARGSKKRGKRSKGRSGSKNASSKGRRDKKNKLKTVVTYDMKRIITERINDLPTSKLERAIDIIKKSMPNISEDDEVELDLDTLDNHTILTLYNTFFRQYESSSGASNGLDGTSGVTRDASSLSPTSAGSRKRRSKALSQEEQSRQIEKIKNKLAILDSASPLSQNGSPGQIQSAAHNGFSSSSDDDVSSESEEE.

Disordered regions lie at residues 1–69 and 85–150; these read MTDI…PAGL and NGYN…NPIP. Residues 9 to 25 are compositionally biased toward low complexity; the sequence is NDVDVNGNNVNDDVSSN. The segment covering 99–120 has biased composition (basic and acidic residues); the sequence is QGLKKEEGGQGTKQEDLDENSK. The span at 130–139 shows a compositional bias: pro residues; sequence EPAPAPPPEP. A Bromo 1 domain is found at 145–254; the sequence is PQNPIPKHQQ…ASFEKHMLNM (110 aa). S270 is subject to Phosphoserine. The tract at residues 283–304 is disordered; it reads QTHNGRPKRTIHPPKSKDIYPY. Over residues 287 to 296 the composition is skewed to basic residues; the sequence is GRPKRTIHPP. Residues 312–421 enclose the Bromo 2 domain; it reads KRLQQAMKFC…EVFNSKWADR (110 aa). 4 disordered regions span residues 424 to 447, 486 to 523, 594 to 636, and 649 to 686; these read LDDYDSDEDSRTQGDYDDYESEYS, IRKERRLARGSKKRGKRSKGRSGSKNASSKGRRDKKNK, SSGA…EQSR, and DSASPLSQNGSPGQIQSAAHNGFSSSSDDDVSSESEEE. S429 is modified (phosphoserine). A compositionally biased stretch (acidic residues) spans 438-447; it reads DYDDYESEYS. Residues 460–499 are a coiled coil; it reads AIQYLEEQLARMKVELQQLKKQELEKIRKERRLARGSKKR. Residues 488-507 show a composition bias toward basic residues; sequence KERRLARGSKKRGKRSKGRS. The region spanning 518-598 is the NET domain; sequence RDKKNKLKTV…RQYESSSGAS (81 aa). 2 stretches are compositionally biased toward polar residues: residues 594 to 620 and 652 to 671; these read SSGASNGLDGTSGVTRDASSLSPTSAG and SPLSQNGSPGQIQSAAHNGF. S615 and S659 each carry phosphoserine. Residues 675 to 686 are compositionally biased toward acidic residues; that stretch reads SDDDVSSESEEE.

It belongs to the BET family. Interacts with the TFIID subunit TAF7 and with acetylated histones H3 and H4. Phosphorylated by the casein kinase CK2 complex.

It localises to the nucleus. In terms of biological role, transcription factor involved in the expression of a broad class of genes including snRNAs. Required for sporulation and DNA-damage repair. Prevents the spreading of SIR silencing at telomeres and protects histone H4, but not H3, from deacetylation. This is Bromodomain-containing factor 1 (BDF1) from Saccharomyces cerevisiae (strain ATCC 204508 / S288c) (Baker's yeast).